Reading from the N-terminus, the 747-residue chain is Elongation factor G, mitochondrial (747 aa).

A mitochondrion-targeting transit peptide spans 1–32 (MTLITRVLNGNLPLRLSTLKAARQLQCGYSSH). The region spanning 42–319 (ERIRNIGISA…AVVDYLPNPG (278 aa)) is the tr-type G domain. GTP-binding positions include 51-58 (AHIDSGKT), 118-122 (DTPGH), and 172-175 (NKLD).

It belongs to the TRAFAC class translation factor GTPase superfamily. Classic translation factor GTPase family. EF-G/EF-2 subfamily.

It is found in the mitochondrion. The protein operates within protein biosynthesis; polypeptide chain elongation. Its function is as follows. Mitochondrial GTPase that catalyzes the GTP-dependent ribosomal translocation step during translation elongation. During this step, the ribosome changes from the pre-translocational (PRE) to the post-translocational (POST) state as the newly formed A-site-bound peptidyl-tRNA and P-site-bound deacylated tRNA move to the P and E sites, respectively. Catalyzes the coordinated movement of the two tRNA molecules, the mRNA and conformational changes in the ribosome. Essential during development as it acts as a retrograde signal from mitochondria to the nucleus to slow down cell proliferation if mitochondrial energy output is low. This is Elongation factor G, mitochondrial from Drosophila mojavensis (Fruit fly).